Reading from the N-terminus, the 360-residue chain is Peptide chain release factor 1 (360 aa).

N5-methylglutamine is present on Gln235. A disordered region spans residues Ala284–Pro313.

Belongs to the prokaryotic/mitochondrial release factor family. In terms of processing, methylated by PrmC. Methylation increases the termination efficiency of RF1.

It localises to the cytoplasm. In terms of biological role, peptide chain release factor 1 directs the termination of translation in response to the peptide chain termination codons UAG and UAA. The sequence is that of Peptide chain release factor 1 from Citrobacter koseri (strain ATCC BAA-895 / CDC 4225-83 / SGSC4696).